Consider the following 430-residue polypeptide: UDP-N-acetylglucosamine 1-carboxyvinyltransferase 1 (430 aa).

22-23 (KN) contributes to the phosphoenolpyruvate binding site. Position 93 (Arg-93) interacts with UDP-N-acetyl-alpha-D-glucosamine. The active-site Proton donor is Cys-117. Cys-117 carries the post-translational modification 2-(S-cysteinyl)pyruvic acid O-phosphothioketal. UDP-N-acetyl-alpha-D-glucosamine contacts are provided by residues 122–126 (RPVDL), Asp-305, and Val-327.

It belongs to the EPSP synthase family. MurA subfamily.

It localises to the cytoplasm. It carries out the reaction phosphoenolpyruvate + UDP-N-acetyl-alpha-D-glucosamine = UDP-N-acetyl-3-O-(1-carboxyvinyl)-alpha-D-glucosamine + phosphate. The protein operates within cell wall biogenesis; peptidoglycan biosynthesis. Its function is as follows. Cell wall formation. Adds enolpyruvyl to UDP-N-acetylglucosamine. The sequence is that of UDP-N-acetylglucosamine 1-carboxyvinyltransferase 1 from Listeria monocytogenes serotype 4b (strain F2365).